The following is a 443-amino-acid chain: MQPLPTLCGRVLVALILACGVAGVQGEERRFPPARATPPLLGFEEIMTPPTKTSWPTGSNASVPRLSAPPQMPKAGRTAGAQRRTLPPPPCERTIEIKETFKYINTVVSCLVFVLGIIGNSTLLRIIYKNKCMRNGPNILIASLALGDLLHIIIDIPINVYKLLAEDWPFGVEMCKLVPFIQKASVGITVLSLCALSIDRYRAVASWSRIKGIGVPKWTAVEIVLIWVVSVVLAVPEAVGFDMITADYKGSYLRICLLHPTQKTAFMQFYKNAKDWWLFSFYFCLPLAITAFFYTLETCEMLRKKSGMQIALNDHLKQRREVAKTVFCLVLVFALCWLPLHLSRILKHTLYDQNDPHRCELLSFLLVLEYIGINMASLNSCINPIALYLVSKRFKNCFKWCLCCWCQSFEEKQSLEDKQSCLKFKANDHGYDNFRSSNKYSSS.

An N-terminal signal peptide occupies residues 1-26; it reads MQPLPTLCGRVLVALILACGVAGVQG. The Extracellular portion of the chain corresponds to 27–102; it reads EERRFPPARA…RTIEIKETFK (76 aa). The segment covering 51–62 has biased composition (polar residues); it reads TKTSWPTGSNAS. A disordered region spans residues 51–89; that stretch reads TKTSWPTGSNASVPRLSAPPQMPKAGRTAGAQRRTLPPP. N60 is a glycosylation site (N-linked (GlcNAc...) asparagine). A helical membrane pass occupies residues 103 to 127; sequence YINTVVSCLVFVLGIIGNSTLLRII. Over 128–138 the chain is Cytoplasmic; it reads YKNKCMRNGPN. A helical membrane pass occupies residues 139-164; sequence ILIASLALGDLLHIIIDIPINVYKLL. Residues 165–176 lie on the Extracellular side of the membrane; the sequence is AEDWPFGVEMCK. C175 and C256 are oxidised to a cystine. A helical membrane pass occupies residues 177-198; that stretch reads LVPFIQKASVGITVLSLCALSI. Residues 199-219 are Cytoplasmic-facing; the sequence is DRYRAVASWSRIKGIGVPKWT. Residues 220-244 traverse the membrane as a helical segment; that stretch reads AVEIVLIWVVSVVLAVPEAVGFDMI. At 245-272 the chain is on the extracellular side; the sequence is TADYKGSYLRICLLHPTQKTAFMQFYKN. A helical transmembrane segment spans residues 273 to 297; the sequence is AKDWWLFSFYFCLPLAITAFFYTLE. Residues 298–325 lie on the Cytoplasmic side of the membrane; that stretch reads TCEMLRKKSGMQIALNDHLKQRREVAKT. Position 306 is a phosphoserine (S306). Residues 326–351 traverse the membrane as a helical segment; it reads VFCLVLVFALCWLPLHLSRILKHTLY. Residues 352 to 363 are Extracellular-facing; that stretch reads DQNDPHRCELLS. Residues 364 to 390 traverse the membrane as a helical segment; it reads FLLVLEYIGINMASLNSCINPIALYLV. Residues 391-443 lie on the Cytoplasmic side of the membrane; it reads SKRFKNCFKWCLCCWCQSFEEKQSLEDKQSCLKFKANDHGYDNFRSSNKYSSS. S-palmitoyl cysteine attachment occurs at residues C403, C404, and C406. S420 carries the phosphoserine modification. Y440 carries the post-translational modification Phosphotyrosine. 3 positions are modified to phosphoserine: S441, S442, and S443.

The protein belongs to the G-protein coupled receptor 1 family. Endothelin receptor subfamily. EDNRB sub-subfamily.

It is found in the cell membrane. In terms of biological role, non-specific receptor for endothelin 1, 2, and 3. Mediates its action by association with G proteins that activate a phosphatidylinositol-calcium second messenger system. The sequence is that of Endothelin receptor type B (EDNRB) from Equus caballus (Horse).